We begin with the raw amino-acid sequence, 121 residues long: UPF0145 protein SAV_4658 (121 aa).

The protein belongs to the UPF0145 family.

The sequence is that of UPF0145 protein SAV_4658 from Streptomyces avermitilis (strain ATCC 31267 / DSM 46492 / JCM 5070 / NBRC 14893 / NCIMB 12804 / NRRL 8165 / MA-4680).